Consider the following 119-residue polypeptide: Holo-[acyl-carrier-protein] synthase (119 aa).

Residues aspartate 2 and glutamate 51 each contribute to the Mg(2+) site.

This sequence belongs to the P-Pant transferase superfamily. AcpS family. Requires Mg(2+) as cofactor.

The protein localises to the cytoplasm. It carries out the reaction apo-[ACP] + CoA = holo-[ACP] + adenosine 3',5'-bisphosphate + H(+). In terms of biological role, transfers the 4'-phosphopantetheine moiety from coenzyme A to a Ser of acyl-carrier-protein. The chain is Holo-[acyl-carrier-protein] synthase from Chlorobium luteolum (strain DSM 273 / BCRC 81028 / 2530) (Pelodictyon luteolum).